We begin with the raw amino-acid sequence, 360 residues long: D-alanine--D-alanine ligase (360 aa).

The ATP-grasp domain maps to 134–343; sequence KILAQRVGVP…YTELITRLIE (210 aa). 169-224 lines the ATP pocket; sequence AEKLGRDMFVKPSNQGSSVGVSHVTNADEYAAALKEAFKYDDKVLVEETVPGTEVE. The Mg(2+) site is built by aspartate 297, glutamate 310, and asparagine 312.

The protein belongs to the D-alanine--D-alanine ligase family. It depends on Mg(2+) as a cofactor. Mn(2+) is required as a cofactor.

Its subcellular location is the cytoplasm. It catalyses the reaction 2 D-alanine + ATP = D-alanyl-D-alanine + ADP + phosphate + H(+). It functions in the pathway cell wall biogenesis; peptidoglycan biosynthesis. Functionally, cell wall formation. The polypeptide is D-alanine--D-alanine ligase (Lactobacillus helveticus (strain DPC 4571)).